A 152-amino-acid chain; its full sequence is 3-hydroxyacyl-[acyl-carrier-protein] dehydratase FabZ (152 aa).

His-58 is an active-site residue.

Belongs to the thioester dehydratase family. FabZ subfamily.

The protein resides in the cytoplasm. It carries out the reaction a (3R)-hydroxyacyl-[ACP] = a (2E)-enoyl-[ACP] + H2O. In terms of biological role, involved in unsaturated fatty acids biosynthesis. Catalyzes the dehydration of short chain beta-hydroxyacyl-ACPs and long chain saturated and unsaturated beta-hydroxyacyl-ACPs. This Prochlorococcus marinus (strain MIT 9515) protein is 3-hydroxyacyl-[acyl-carrier-protein] dehydratase FabZ.